The sequence spans 98 residues: Signal peptidase complex subunit 1 (98 aa).

The Cytoplasmic portion of the chain corresponds to 1-18; the sequence is MLDIQTHMDFAGQGKAER. The chain crosses the membrane as a helical span at residues 19 to 38; the sequence is WSRFIITFFGIVGLVYGAFV. Topologically, residues 39-42 are lumenal; it reads QQFS. The chain crosses the membrane as a helical span at residues 43–65; sequence QTVYILGAGFVLSSLITIPPWPL. Topologically, residues 66–98 are cytoplasmic; it reads YRRNALKWQKPIDTDAKSSSSESGDEGKKKKKQ. Residues 78–98 form a disordered region; it reads DTDAKSSSSESGDEGKKKKKQ. Phosphoserine occurs at positions 84, 85, 86, and 88.

The protein belongs to the SPCS1 family. As to quaternary structure, component of the signal peptidase complex (SPC) composed of a catalytic subunit twr/SEC11 and three accessory subunits Spase12/SPCS1, Spase25/SPCS2 and Spase22-23/SPCS3. The complex induces a local thinning of the ER membrane which is used to measure the length of the signal peptide (SP) h-region of protein substrates. This ensures the selectivity of the complex towards h-regions shorter than 18-20 amino acids.

Its subcellular location is the endoplasmic reticulum membrane. In terms of biological role, component of the signal peptidase complex (SPC) which catalyzes the cleavage of N-terminal signal sequences from nascent proteins as they are translocated into the lumen of the endoplasmic reticulum. Dispensable for SPC enzymatic activity. Its function is as follows. (Microbial infection) Plays an important role in infection by flaviviruses such as West Nile virus and Dengue virus type 2. The polypeptide is Signal peptidase complex subunit 1 (Spase12) (Drosophila melanogaster (Fruit fly)).